A 180-amino-acid polypeptide reads, in one-letter code: Acireductone dioxygenase (180 aa).

The Fe(2+) site is built by His97, His99, Glu103, and His141. Residues His97, His99, Glu103, and His141 each coordinate Ni(2+).

The protein belongs to the acireductone dioxygenase (ARD) family. Monomer. Fe(2+) is required as a cofactor. The cofactor is Ni(2+).

It carries out the reaction 1,2-dihydroxy-5-(methylsulfanyl)pent-1-en-3-one + O2 = 3-(methylsulfanyl)propanoate + CO + formate + 2 H(+). The enzyme catalyses 1,2-dihydroxy-5-(methylsulfanyl)pent-1-en-3-one + O2 = 4-methylsulfanyl-2-oxobutanoate + formate + 2 H(+). It participates in amino-acid biosynthesis; L-methionine biosynthesis via salvage pathway; L-methionine from S-methyl-5-thio-alpha-D-ribose 1-phosphate: step 5/6. In terms of biological role, catalyzes 2 different reactions between oxygen and the acireductone 1,2-dihydroxy-3-keto-5-methylthiopentene (DHK-MTPene) depending upon the metal bound in the active site. Fe-containing acireductone dioxygenase (Fe-ARD) produces formate and 2-keto-4-methylthiobutyrate (KMTB), the alpha-ketoacid precursor of methionine in the methionine recycle pathway. Ni-containing acireductone dioxygenase (Ni-ARD) produces methylthiopropionate, carbon monoxide and formate, and does not lie on the methionine recycle pathway. The chain is Acireductone dioxygenase from Citrobacter koseri (strain ATCC BAA-895 / CDC 4225-83 / SGSC4696).